The sequence spans 52 residues: Large ribosomal subunit protein bL32c (52 aa).

The protein belongs to the bacterial ribosomal protein bL32 family.

The protein localises to the plastid. It localises to the chloroplast. This Olimarabidopsis pumila (Dwarf rocket) protein is Large ribosomal subunit protein bL32c.